Reading from the N-terminus, the 447-residue chain is tRNA-2-methylthio-N(6)-dimethylallyladenosine synthase (447 aa).

An MTTase N-terminal domain is found at 4–120 (RSFFIKTYGC…INELLERSRT (117 aa)). Residues C13, C49, C83, C161, C165, and C168 each contribute to the [4Fe-4S] cluster site. The 236-residue stretch at 147–382 (HEGEFRKFVT…QARQDEIGLE (236 aa)) folds into the Radical SAM core domain. In terms of domain architecture, TRAM spans 385 to 446 (QEYIGTTQEV…QHSLRGSIVE (62 aa)).

Belongs to the methylthiotransferase family. MiaB subfamily. In terms of assembly, monomer. The cofactor is [4Fe-4S] cluster.

Its subcellular location is the cytoplasm. The enzyme catalyses N(6)-dimethylallyladenosine(37) in tRNA + (sulfur carrier)-SH + AH2 + 2 S-adenosyl-L-methionine = 2-methylsulfanyl-N(6)-dimethylallyladenosine(37) in tRNA + (sulfur carrier)-H + 5'-deoxyadenosine + L-methionine + A + S-adenosyl-L-homocysteine + 2 H(+). Functionally, catalyzes the methylthiolation of N6-(dimethylallyl)adenosine (i(6)A), leading to the formation of 2-methylthio-N6-(dimethylallyl)adenosine (ms(2)i(6)A) at position 37 in tRNAs that read codons beginning with uridine. The polypeptide is tRNA-2-methylthio-N(6)-dimethylallyladenosine synthase (Desulfotalea psychrophila (strain LSv54 / DSM 12343)).